We begin with the raw amino-acid sequence, 447 residues long: MSTMTPAEIVSELDKHIIGQAKAKKAVAVALRNRWRRQQVADPLRQEITPKNILMIGPTGVGKTEIARRLAKLADAPFIKIEATKFTEVGYVGRDVDSIVRDLIEISVKQTREAEMRKVRSKATDQAEDRILDILLPQPRAVGFGGNAEHANDDNNATRQTFRKRLREGQLDDKEVELDLEQPSVGMDIMAPPGMEEMTEQIRSMFSNLGSGKKQRRKVKIKEALKLLTDEEAAKMLNEEEVKTKAVQNVEQNGIVFLDEIDKITSRNNEGSGGEVSRQGVQRDLLPLVEGTTVNTKYGMVKTDHILFIASGAFHLAKPSDLIPELQGRFPIRVELDSLSVNDFEAILVATDASLVKQYQALLATEDVQLEFADDGIRRLAEIAFAVNEKTENIGARRLYTVIEKLLEEVSFSAGNHAGERVTIDAKYVDRALGEVSQDEDLSRYVL.

Residues isoleucine 18, glycine 60 to glutamate 65, aspartate 259, glutamate 325, and arginine 397 each bind ATP.

Belongs to the ClpX chaperone family. HslU subfamily. A double ring-shaped homohexamer of HslV is capped on each side by a ring-shaped HslU homohexamer. The assembly of the HslU/HslV complex is dependent on binding of ATP.

Its subcellular location is the cytoplasm. Its function is as follows. ATPase subunit of a proteasome-like degradation complex; this subunit has chaperone activity. The binding of ATP and its subsequent hydrolysis by HslU are essential for unfolding of protein substrates subsequently hydrolyzed by HslV. HslU recognizes the N-terminal part of its protein substrates and unfolds these before they are guided to HslV for hydrolysis. In Burkholderia cenocepacia (strain ATCC BAA-245 / DSM 16553 / LMG 16656 / NCTC 13227 / J2315 / CF5610) (Burkholderia cepacia (strain J2315)), this protein is ATP-dependent protease ATPase subunit HslU.